A 170-amino-acid polypeptide reads, in one-letter code: Shikimate kinase (170 aa).

15–20 is a binding site for ATP; sequence GAGKTT. Threonine 19 contributes to the Mg(2+) binding site. Substrate is bound by residues aspartate 37, arginine 61, and glycine 83. Arginine 121 serves as a coordination point for ATP. A substrate-binding site is contributed by arginine 140.

This sequence belongs to the shikimate kinase family. As to quaternary structure, monomer. It depends on Mg(2+) as a cofactor.

It localises to the cytoplasm. The enzyme catalyses shikimate + ATP = 3-phosphoshikimate + ADP + H(+). Its pathway is metabolic intermediate biosynthesis; chorismate biosynthesis; chorismate from D-erythrose 4-phosphate and phosphoenolpyruvate: step 5/7. Functionally, catalyzes the specific phosphorylation of the 3-hydroxyl group of shikimic acid using ATP as a cosubstrate. This chain is Shikimate kinase, found in Neisseria gonorrhoeae (strain ATCC 700825 / FA 1090).